A 354-amino-acid chain; its full sequence is MGCTLSAEDKAAVERSKMIDRNLREDGEKAAKEVKLLLLGAGESGKSTIVKQMKIIHEDGYSEDECKQYKVVVYSNTIQSIIAIIRAMGRLKIDFGEAARADDARQLFVLAGSAEEGVMTSELAGVIKRLWRDGGVQACFGRSREYQLNDSASYYLNDLDRISQTNYIPTQQDVLRTRVKTTGIVETHFTFKELYFKMFDVGGQRSERKKWIHCFEGVTAIIFCVALSDYDLVLAEDEEMNRMHESMKLFDSICNNKWFTDTSIILFLNKKDLFEEKIKRSPLTICYPEYTGSNTYEEAAAYIQCQFEDLNRRKDTKEIYTHFTCATDTKNVQFVFDAVTDVIIKNNLKECGLY.

The N-myristoyl glycine moiety is linked to residue Gly2. Residue Cys3 is the site of S-palmitoyl cysteine attachment. Residues 32 to 354 (KEVKLLLLGA…KNNLKECGLY (323 aa)) enclose the G-alpha domain. A G1 motif region spans residues 35-48 (KLLLLGAGESGKST). GTP is bound by residues Gly42, Glu43, Ser44, Gly45, Lys46, Ser47, Thr48, Asp150, Ser151, Leu175, Arg176, Thr177, Arg178, Val179, Lys180, Thr181, Val201, Gly203, Asn269, Lys270, Asp272, Leu273, Cys325, Ala326, and Thr327. Ser47 serves as a coordination point for Mg(2+). The interval 173–181 (DVLRTRVKT) is G2 motif. Residue Thr181 coordinates Mg(2+). The interval 196–205 (FKMFDVGGQR) is G3 motif. The interval 265–272 (ILFLNKKD) is G4 motif. A G5 motif region spans residues 324-329 (TCATDT).

It belongs to the G-alpha family. G(i/o/t/z) subfamily. In terms of assembly, heterotrimeric G proteins are composed of 3 units; alpha, beta and gamma. The alpha subunit contains the guanine nucleotide binding site. GTP binding causes dissociation of the heterotrimer, liberating the individual subunits so that they can interact with downstream effector proteins. Forms a complex with CCDC88A/GIV and EGFR which leads to enhanced EGFR signaling and triggering of cell migration; ligand stimulation is required for recruitment of GNAI3 to the complex. Interacts (inactive GDP-bound form) with CCDC88A/GIV (via GBA motif); the interaction leads to activation of GNAI3. Interacts (inactive GDP-bound form) with CCDC88C/DAPLE (via GBA motif); the interaction leads to activation of GNAI3. Interacts (inactive GDP-bound form) with NUCB1 (via GBA motif) and NUCB2 (via GBA motif); the interaction leads to activation of GNAI3. Interacts (inactive GDP-bound form) with PLCD4 (via GBA motif); the interaction leads to activation of GNAI3. Interacts with INSR; the interaction is probably mediated by CCDC88A/GIV. Interacts with GPSM1. Interacts (GDP-bound form) with GPSM2 (via GoLoco domains). Does not interact with RGS2. Interacts with RGS8 and RGS10; this strongly enhances the intrinsic GTPase activity. Interacts with RGS16; this strongly enhances the intrinsic GTPase activity. Interacts with RGS12. Interacts (via active GTP- or inactive GDP-bound form) with RGS14. Interacts (via active GTP-bound form) with TRPC5 (via ANK repeats) in a homotetrameric ion channel; the interaction is direct and activates the channel activity.

Its subcellular location is the cytoplasm. It is found in the cell membrane. The protein resides in the cytoskeleton. The protein localises to the microtubule organizing center. It localises to the centrosome. Its function is as follows. Heterotrimeric guanine nucleotide-binding proteins (G proteins) function as transducers downstream of G protein-coupled receptors (GPCRs) in numerous signaling cascades. The alpha chain contains the guanine nucleotide binding site and alternates between an active, GTP-bound state and an inactive, GDP-bound state. Signaling by an activated GPCR promotes GDP release and GTP binding. The alpha subunit has a low GTPase activity that converts bound GTP to GDP, thereby terminating the signal. Both GDP release and GTP hydrolysis are modulated by numerous regulatory proteins. Signaling is mediated via effector proteins, such as adenylate cyclase. Inhibits adenylate cyclase activity, leading to decreased intracellular cAMP levels. Stimulates the activity of receptor-regulated K(+) channels. The active GTP-bound form prevents the association of RGS14 with centrosomes and is required for the translocation of RGS14 from the cytoplasm to the plasma membrane. May play a role in cell division. The active GTP-bound form activates the calcium permeant TRPC5 ion channels. In Cricetulus griseus (Chinese hamster), this protein is Guanine nucleotide-binding protein G(i) subunit alpha-3 (GNAI3).